We begin with the raw amino-acid sequence, 278 residues long: MTVLHSVDFFPSGKAPVAIEPRLPQAAFPEHHHDFHEIVIVEHGTGIHVFNGQPYTISGGTVCFVRDHDRHLYEHTDNLCLTNVLWRSPDAFQFLAGLDQLLPQEQDGYYPSHWRVNQSVLQQVRQLVGLMERTGDGMDAPAVANREILFMQLLVLLRRSSLMEGATNNDAKLNQLMAWLEDHFAEEVCWEAVAEQFSLSLRTLHRQLKQHTGLTPQRYLNRLRLIKARHLLRHSDHSVTEIAYRCGFGDSNHFSTLFRREFNWSPRDIRQGRDAIIQ.

One can recognise an HTH araC/xylS-type domain in the interval 174 to 272; it reads NQLMAWLEDH…NWSPRDIRQG (99 aa). 2 DNA-binding regions (H-T-H motif) span residues 191–212 and 239–262; these read EAVA…KQHT and VTEI…RREF.

In terms of assembly, binds DNA as a dimer.

Its subcellular location is the cytoplasm. Activates expression of the rhaBAD and rhaT operons. This is HTH-type transcriptional activator RhaS from Salmonella heidelberg (strain SL476).